An 88-amino-acid chain; its full sequence is Exodeoxyribonuclease 7 small subunit (88 aa).

Positions 69 to 88 are disordered; it reads DPMHPDDGEPFDPSLVSTSQ.

This sequence belongs to the XseB family. As to quaternary structure, heterooligomer composed of large and small subunits.

Its subcellular location is the cytoplasm. It catalyses the reaction Exonucleolytic cleavage in either 5'- to 3'- or 3'- to 5'-direction to yield nucleoside 5'-phosphates.. Its function is as follows. Bidirectionally degrades single-stranded DNA into large acid-insoluble oligonucleotides, which are then degraded further into small acid-soluble oligonucleotides. The protein is Exodeoxyribonuclease 7 small subunit of Xylella fastidiosa (strain M23).